The chain runs to 587 residues: Putative ankyrin repeat protein L66 (587 aa).

16 ANK repeats span residues 77–106 (DKNLSMLLATKYGKLNIIKYLVRNGTDIRI), 108–136 (NNYPVRKASKYGYLDIVKYLIREDCDVSD), 137–166 (YDNYALRKATKNGYFEIVKLLVDQGADVHC), 168–196 (DNAPIKLACKYGYSKMVKFFHKKFLDVNY), 199–228 (NEDLLLKLASSGGHYKIVKYLVTKSNNIHF), 230–256 (DSLISVIKKGHLDILKYFISKGVILGN), 259–288 (NIRNATLMACKKGHYNVVEYLIDNIISIEN), 302–331 (FKKNLITNTCISGNLDMLKYLISKGINVAF), 333–360 (DNLPIKISACHDHLHLVKYLVSISNVKI), 361–390 (NYENILISASENGCIKVVKYLVDKGVNVKD), 392–418 (TAIYSAGINGYLQIVKFLESNGADLIK), 420–448 (HNEIFLECSSNGYLNVIKYIVSKYNINKS), 449–478 (IYDKALIIASKNNQLKTVKYLVHMGADIKS), 480–507 (KFHDMEKIIDNDLELLKYLVSKGLKINN), 509–537 (YKNLISKIIMNNDLDKLKYLISLGVNMKC), and 539–567 (RIDTFNSCIQNRNKEMLSYLISRKIKLIC).

The chain is Putative ankyrin repeat protein L66 from Acanthamoeba polyphaga mimivirus (APMV).